Consider the following 529-residue polypeptide: Glycerol kinase 5 (529 aa).

S28 and S29 together coordinate ATP. 3 residues coordinate glycerol: R98, D275, and Q276. Positions 297, 340, and 440 each coordinate ATP.

The protein belongs to the FGGY kinase family.

The protein localises to the cytoplasm. The enzyme catalyses glycerol + ATP = sn-glycerol 3-phosphate + ADP + H(+). It participates in polyol metabolism; glycerol degradation via glycerol kinase pathway; sn-glycerol 3-phosphate from glycerol: step 1/1. Functionally, skin-specific kinase that plays a key role in glycerol metabolism, catalyzing its phosphorylation to produce sn-glycerol 3-phosphate. Involved in skin-specific regulation of sterol regulatory element-binding protein (SREBP) processing and lipid biosynthesis. This Homo sapiens (Human) protein is Glycerol kinase 5.